The sequence spans 823 residues: Protein Shroom1 (823 aa).

Met-1 is subject to N-acetylmethionine. Disordered stretches follow at residues 1–55 (MEAL…TERL), 72–110 (PTSK…LNRQ), and 124–159 (ATAH…TSFQ). 2 stretches are compositionally biased toward polar residues: residues 28 to 50 (RADS…TPSP) and 72 to 85 (PTSK…TQRP). Phosphoserine is present on residues Ser-103, Ser-133, Ser-137, Ser-166, Ser-190, and Ser-224. The region spanning 145-233 (LQGAQRRVLR…SEPGKLHRVG (89 aa)) is the ASD1 domain. Positions 181-200 (TAHVRSASSSQELGEEEPAR) are disordered. Disordered stretches follow at residues 270 to 303 (SSTE…GPCK) and 349 to 375 (QTKP…PEDD). Thr-383 carries the phosphothreonine modification. The residue at position 385 (Ser-385) is a Phosphoserine. Disordered stretches follow at residues 420–503 (LHET…LTWG) and 566–620 (EMGE…STQA). Polar residues-rich tracts occupy residues 444–468 (RPTS…TDPS), 489–503 (SETP…LTWG), and 586–620 (QDLQ…STQA). In terms of domain architecture, ASD2 spans 517–796 (EALVQELARL…QLDTIWSDLS (280 aa)).

The protein belongs to the shroom family. Interacts with F-actin.

It localises to the cytoplasm. The protein resides in the cytoskeleton. Functionally, may be involved in the assembly of microtubule arrays during cell elongation. This is Protein Shroom1 (Shroom1) from Mus musculus (Mouse).